Reading from the N-terminus, the 529-residue chain is Tyrosinase (529 aa).

An N-terminal signal peptide occupies residues 1–18 (MLLAVLYCLLWSFQTSAG). Over 19-476 (HFPRACVSSK…YLEQASRIWS (458 aa)) the chain is Lumenal, melanosome. N-linked (GlcNAc...) asparagine glycans are attached at residues N86, N111, and N161. Residues H180, H202, and H211 each contribute to the Cu cation site. N-linked (GlcNAc...) asparagine glycosylation is present at N230. The disordered stretch occupies residues 287 to 313 (SLCNGTPEGPLRRNPGNHDKSRTPRLP). N-linked (GlcNAc...) asparagine glycosylation occurs at N337. Residues H363 and H367 each contribute to the Cu cation site. The N-linked (GlcNAc...) asparagine glycan is linked to N371. Residue H390 participates in Cu cation binding. A helical membrane pass occupies residues 477-497 (WLLGAAMVGAVLTALLAGLVS). Residues 498–529 (LLCRHKRKQLPEEKQPLLMEKEDYHSLYQSHL) lie on the Cytoplasmic side of the membrane.

It belongs to the tyrosinase family. In terms of assembly, forms an OPN3-dependent complex with DCT in response to blue light in melanocytes. It depends on Cu(2+) as a cofactor. Post-translationally, glycosylated.

It localises to the melanosome membrane. The protein localises to the melanosome. The enzyme catalyses 2 L-dopa + O2 = 2 L-dopaquinone + 2 H2O. The catalysed reaction is L-tyrosine + O2 = L-dopaquinone + H2O. It carries out the reaction 2 5,6-dihydroxyindole-2-carboxylate + O2 = 2 indole-5,6-quinone-2-carboxylate + 2 H2O. Its function is as follows. This is a copper-containing oxidase that functions in the formation of pigments such as melanins and other polyphenolic compounds. Catalyzes the initial and rate limiting step in the cascade of reactions leading to melanin production from tyrosine. In addition to hydroxylating tyrosine to DOPA (3,4-dihydroxyphenylalanine), also catalyzes the oxidation of DOPA to DOPA-quinone, and possibly the oxidation of DHI (5,6-dihydroxyindole) to indole-5,6 quinone. This chain is Tyrosinase, found in Homo sapiens (Human).